The primary structure comprises 227 residues: Cytidylate kinase (227 aa).

Residue 12-20 (GPSGAGKGT) coordinates ATP.

Belongs to the cytidylate kinase family. Type 1 subfamily.

The protein localises to the cytoplasm. The catalysed reaction is CMP + ATP = CDP + ADP. It catalyses the reaction dCMP + ATP = dCDP + ADP. In Xanthomonas oryzae pv. oryzae (strain PXO99A), this protein is Cytidylate kinase.